Reading from the N-terminus, the 368-residue chain is Protein RecA (368 aa).

80-87 (GPESSGKT) provides a ligand contact to ATP. Residues 344 to 353 (NPTFTATPDS) are compositionally biased toward polar residues. Residues 344–368 (NPTFTATPDSENADNADDEFSEEEL) are disordered. Residues 354-368 (ENADNADDEFSEEEL) show a composition bias toward acidic residues.

This sequence belongs to the RecA family.

Its subcellular location is the cytoplasm. Can catalyze the hydrolysis of ATP in the presence of single-stranded DNA, the ATP-dependent uptake of single-stranded DNA by duplex DNA, and the ATP-dependent hybridization of homologous single-stranded DNAs. It interacts with LexA causing its activation and leading to its autocatalytic cleavage. The protein is Protein RecA of Mannheimia haemolytica (Pasteurella haemolytica).